A 351-amino-acid chain; its full sequence is Uroporphyrinogen decarboxylase (351 aa).

Substrate-binding positions include 25–29 (RQAGR), D74, Y151, S206, and H325.

The protein belongs to the uroporphyrinogen decarboxylase family. In terms of assembly, homodimer.

The protein resides in the cytoplasm. It carries out the reaction uroporphyrinogen III + 4 H(+) = coproporphyrinogen III + 4 CO2. It functions in the pathway porphyrin-containing compound metabolism; protoporphyrin-IX biosynthesis; coproporphyrinogen-III from 5-aminolevulinate: step 4/4. Its function is as follows. Catalyzes the decarboxylation of four acetate groups of uroporphyrinogen-III to yield coproporphyrinogen-III. The protein is Uroporphyrinogen decarboxylase of Chlorobium phaeovibrioides (strain DSM 265 / 1930) (Prosthecochloris vibrioformis (strain DSM 265)).